We begin with the raw amino-acid sequence, 3916 residues long: Fusarin C synthetase (3916 aa).

Residues 9-440 (KEPIAIIGTS…GTNVHAIIEQ (432 aa)) form the Ketosynthase family 3 (KS3) domain. Active-site for beta-ketoacyl synthase activity residues include C182, H319, and H360. A malonyl-CoA:ACP transacylase (MAT) domain region spans residues 548 to 866 (VFTGQGAQWP…QGTVARNIHD (319 aa)). Residues 935–1068 (HPLLGARSVE…GQLRVEFGCS (134 aa)) form an N-terminal hotdog fold region. Residues 935–1228 (HPLLGARSVE…GLTCTSLLRP (294 aa)) form a dehydratase (DH) domain region. Positions 935–1231 (HPLLGARSVE…CTSLLRPGPS (297 aa)) constitute a PKS/mFAS DH domain. The active-site Proton acceptor; for dehydratase activity is the H967. Residues 1084 to 1231 (LTSVNMERFY…CTSLLRPGPS (148 aa)) are C-terminal hotdog fold. D1141 functions as the Proton donor; for dehydratase activity in the catalytic mechanism. A C-methyltransferase (CMeT) domain region spans residues 1347–1575 (IQAVGENLPS…VNDFVDAEKY (229 aa)). Residues 2092–2266 (TYLLIGCTGG…AASVMHIGMV (175 aa)) are ketoreductase (KR) domain 1. The Carrier 1 domain maps to 2372-2449 (EILAVVEEEF…ELCSTVVSHL (78 aa)). S2409 carries the O-(pantetheine 4'-phosphoryl)serine modification. Residues 2487–2510 (NEPFTIRNSPNSTQVTSEAGVDED) are disordered. The span at 2492-2503 (IRNSPNSTQVTS) shows a compositional bias: polar residues. Residues 2522–2806 (PLSFAQERLW…VNLLPLRLKI (285 aa)) form a condensation region. Residues 2975 to 3385 (EFVVKQPDDT…RIAGDSQIKL (411 aa)) are adenylation. One can recognise a Carrier 2 domain in the interval 3493–3570 (KPLTETQERL…EMAAKIDGST (78 aa)). O-(pantetheine 4'-phosphoryl)serine is present on S3530. A thiolester reductase (R) domain region spans residues 3612–3833 (LTGATGFLGV…DFVPVDVVAA (222 aa)).

The protein in the C-terminal section; belongs to the NRP synthetase family.

It functions in the pathway mycotoxin biosynthesis. Functionally, fusarin C synthetase; part of the gene cluster that mediates the biosynthesis of the mycotoxin fusarin C. Within the cluster, FUS1, FUS2, FUS8 and FUS9 are sufficient for fusarin production. The roles of the other FUS members are yet undetermined. The fusarin C synthetase FUS1 is responsible for the condensation of one acetyl-coenzyme A (CoA) unit with six malonyl-CoA units and the amide linkage of the arising heptaketide and homoserine, subsequently releasing the first intermediate, prefusarin, as an alcohol with an open ring structure. The cytochrome P450 monooxygenase FUS8 participates in multiple oxidation processes at carbon C-20 and is able to use the FUS1 product as substrate, resulting in formation of 20-hydroxy-prefusarin. This reaction seems to be essential before the 2-pyrrolidone ring closure can be catalyzed by FUS2, generating 20-hydroxy-fusarin. FUS8 is able to further oxidizes carbon C-20 after ring closure, resulting in the formation of carboxy-fusarin C. As the last step, FUS9 methylates the hydroxyl group at C-21 to generate fusarin C. Fusarin C can then rearrange to epi-fusarin C, the (z)-isomers, and fusarin A and fusarin D. In Gibberella fujikuroi (strain CBS 195.34 / IMI 58289 / NRRL A-6831) (Bakanae and foot rot disease fungus), this protein is Fusarin C synthetase.